The chain runs to 366 residues: Chorismate synthase (366 aa).

NADP(+) contacts are provided by Arg-48 and Arg-54. FMN-binding positions include 125–127, 238–239, Gly-278, 293–297, and Arg-319; these read RSS, NA, and KPTSS.

The protein belongs to the chorismate synthase family. In terms of assembly, homotetramer. FMNH2 is required as a cofactor.

The catalysed reaction is 5-O-(1-carboxyvinyl)-3-phosphoshikimate = chorismate + phosphate. The protein operates within metabolic intermediate biosynthesis; chorismate biosynthesis; chorismate from D-erythrose 4-phosphate and phosphoenolpyruvate: step 7/7. Catalyzes the anti-1,4-elimination of the C-3 phosphate and the C-6 proR hydrogen from 5-enolpyruvylshikimate-3-phosphate (EPSP) to yield chorismate, which is the branch point compound that serves as the starting substrate for the three terminal pathways of aromatic amino acid biosynthesis. This reaction introduces a second double bond into the aromatic ring system. This Neisseria meningitidis serogroup A / serotype 4A (strain DSM 15465 / Z2491) protein is Chorismate synthase.